The following is a 262-amino-acid chain: uncharacterized protein (262 aa).

An S4 RNA-binding domain is found at 6-70; that stretch reads LRINQFLAHY…LKNKKFSVLV (65 aa). D108 serves as the catalytic Nucleophile.

The protein belongs to the pseudouridine synthase RsuA family.

It carries out the reaction a uridine in RNA = a pseudouridine in RNA. This is an uncharacterized protein from Helicobacter pylori (strain ATCC 700392 / 26695) (Campylobacter pylori).